A 294-amino-acid polypeptide reads, in one-letter code: Putative glucose-6-phosphate 1-epimerase (294 aa).

Residues R74 and R99 each coordinate substrate. Residue H164 is part of the active site. D208 is a binding site for substrate. Residue E267 is part of the active site.

This sequence belongs to the glucose-6-phosphate 1-epimerase family. As to quaternary structure, monomer in solution.

The catalysed reaction is alpha-D-glucose 6-phosphate = beta-D-glucose 6-phosphate. The chain is Putative glucose-6-phosphate 1-epimerase (yeaD) from Escherichia coli (strain K12).